Here is a 259-residue protein sequence, read N- to C-terminus: Putative hydro-lyase Bphyt_4813 (259 aa).

The protein belongs to the D-glutamate cyclase family.

This Paraburkholderia phytofirmans (strain DSM 17436 / LMG 22146 / PsJN) (Burkholderia phytofirmans) protein is Putative hydro-lyase Bphyt_4813.